A 203-amino-acid polypeptide reads, in one-letter code: ATP-dependent Clp protease proteolytic subunit (203 aa).

The active-site Nucleophile is the Ser-107. His-132 is a catalytic residue.

It belongs to the peptidase S14 family. As to quaternary structure, fourteen ClpP subunits assemble into 2 heptameric rings which stack back to back to give a disk-like structure with a central cavity, resembling the structure of eukaryotic proteasomes.

It localises to the cytoplasm. The enzyme catalyses Hydrolysis of proteins to small peptides in the presence of ATP and magnesium. alpha-casein is the usual test substrate. In the absence of ATP, only oligopeptides shorter than five residues are hydrolyzed (such as succinyl-Leu-Tyr-|-NHMec, and Leu-Tyr-Leu-|-Tyr-Trp, in which cleavage of the -Tyr-|-Leu- and -Tyr-|-Trp bonds also occurs).. Functionally, cleaves peptides in various proteins in a process that requires ATP hydrolysis. Has a chymotrypsin-like activity. Plays a major role in the degradation of misfolded proteins. This is ATP-dependent Clp protease proteolytic subunit from Shewanella loihica (strain ATCC BAA-1088 / PV-4).